We begin with the raw amino-acid sequence, 184 residues long: Probable sensory rhodopsin transducer (184 aa).

The next 2 membrane-spanning stretches (helical) occupy residues 14-34 (TLGV…VNVY) and 52-72 (GLVS…TIIG). The HAMP domain maps to 73-125 (RERTAAVETLAAQARQIEQGELDVDLATNRTDDVGDIYRALAVLRDSEQLDRQ).

The protein belongs to the methyl-accepting chemotaxis (MCP) protein family. In terms of assembly, interacts with Xop2/SRM.

It localises to the membrane. Its function is as follows. The HtrM-Xop2/SRM complex may interact with CheB or CheR and modulate their availability to Sop1 or Sop2. This is Probable sensory rhodopsin transducer (htrM) from Haloarcula marismortui (strain ATCC 43049 / DSM 3752 / JCM 8966 / VKM B-1809) (Halobacterium marismortui).